A 216-amino-acid polypeptide reads, in one-letter code: MSLGLVGRKVGMTRIFTAEGDSIPVTVVDVSDNRVTQIKTVETDGYTAVQVAFGSRRASRVTKPLAGHLAKAGVEAGEILKEFRIDAAKAAELSNGAIVGPDLFEVGQKVDVQGVSIGKGYAGTIKRYNFGSGRASHGNSRSHNVPGSIGMAQDPGRVFPGKRMTGHMGDVTVTVQNLEIARIDAERKLLLVKGAIPGAKGGKVFVTPAVKTKGAK.

Gln153 is subject to N5-methylglutamine.

It belongs to the universal ribosomal protein uL3 family. Part of the 50S ribosomal subunit. Forms a cluster with proteins L14 and L19. In terms of processing, methylated by PrmB.

Its function is as follows. One of the primary rRNA binding proteins, it binds directly near the 3'-end of the 23S rRNA, where it nucleates assembly of the 50S subunit. The polypeptide is Large ribosomal subunit protein uL3 (Burkholderia multivorans (strain ATCC 17616 / 249)).